Here is a 128-residue protein sequence, read N- to C-terminus: Large ribosomal subunit protein uL22 (128 aa).

Residues 1–22 are disordered; sequence MARGHRSQIKRERNANKDTRPS. The span at 9-21 shows a compositional bias: basic and acidic residues; sequence IKRERNANKDTRP.

This sequence belongs to the universal ribosomal protein uL22 family. Part of the 50S ribosomal subunit.

This protein binds specifically to 23S rRNA; its binding is stimulated by other ribosomal proteins, e.g. L4, L17, and L20. It is important during the early stages of 50S assembly. It makes multiple contacts with different domains of the 23S rRNA in the assembled 50S subunit and ribosome. In terms of biological role, the globular domain of the protein is located near the polypeptide exit tunnel on the outside of the subunit, while an extended beta-hairpin is found that lines the wall of the exit tunnel in the center of the 70S ribosome. The protein is Large ribosomal subunit protein uL22 of Lachnoclostridium phytofermentans (strain ATCC 700394 / DSM 18823 / ISDg) (Clostridium phytofermentans).